A 102-amino-acid chain; its full sequence is Hemoglobin subunit beta-Z (102 aa).

In terms of domain architecture, Globin spans 1-102 (FGNLSSAQAI…VANALSHKYH (102 aa)). Heme b contacts are provided by His19 and His48.

The protein belongs to the globin family. Heterotetramer of two alpha chains and two beta chains.

Its function is as follows. This is an embryonic beta chain. In Mesocricetus auratus (Golden hamster), this protein is Hemoglobin subunit beta-Z (HBBZ).